The sequence spans 260 residues: Putative enoyl-CoA hydratase/isomerase YngF (260 aa).

It belongs to the enoyl-CoA hydratase/isomerase family.

The chain is Putative enoyl-CoA hydratase/isomerase YngF (yngF) from Bacillus subtilis (strain 168).